The primary structure comprises 964 residues: MVDIIDKALRMGEGHQLKKLENVAKAVNALEDEISALSDEDLKAQTPKFKQEIENGKSLDEIMPEAFATVREVSKRTLGQRHFDVQLMGGAALHWGNIAEMKTGEGKTLVATLPTYLNALEGRGVHVVTVNDYLASYQSELMGRIYRFLGMNVGCIITEQKPPERRKQYNADITYGTNNEFGFDYLRDNMAWEKADLVQRGHHYAIVDEVDSILIDEARTPLIISGPAEGDVTRWYRQFAKLVLKLTRDEDYDVDEKKKVVGILDPGITKVEDFLGIDNLYEPANTALIGYLNNAIKAKELFLRDKDYVVTQGEVLIVDEHTGRILPGRRYNEGLHQAIEAKEGVEVKAENQTFATITLQNYFRMYDKLAGMTGTAETEAAEFMNTYKLGVLPIKTNKPMIRKDQDDLIYRTKKEKLAAIVKDVAKRHAKGQPVLLGTASVESSEVVSTLLDVAKIPHQVLNAKQHEKEAAVVAVAGRKGAVTVATNMAGRGTDIMLGGNVEFLADAKLKSEGYSPEDTPEEYEKRWPGTLNEIKAQVKDEHEEVKELGGLYVLGTERHESRRIDNQLRGRSGRQGDPGESRFYLSLEDDLMRLFNTQLVAQVMAKGMEEGQPIEAKSVTKGVRTAQKAVESRNYEIRKNVLKYDDVMNKQRTVIYSERQAVLKGEDIHKDILRFISDTVESYIKGANKGSEKPKDWDWEGLFKALNTVIPTKVDEDEVRKIVGGLKGAKAVEAVRDLIVEDARQQYGEMEETIGETGLRDLERRVVLAVLDRKWREHLYEMDYLKDGIGLRGMGQRDPLVEYQREGYQMYNSMIEAIKEETVQLLFHIDIKQVATTDEAVDEVEETAESADTIAVASGPDENGESVVEAAEGEVEEEDEDTDAKQAIAESAAASGAGESTLPVAGPAPISHAEGKVPVSKRPKSEELKTPWADGRTFPGTGKNAPCPCGSGRKYKMCHGQNEK.

Residues Gln-86, 104 to 108 (GEGKT), and Asp-494 contribute to the ATP site. The tract at residues 848-964 (AESADTIAVA…YKMCHGQNEK (117 aa)) is disordered. Positions 871–882 (AEGEVEEEDEDT) are enriched in acidic residues. A compositionally biased stretch (low complexity) spans 889–900 (AESAAASGAGES). Residues Cys-947, Cys-949, Cys-958, and His-959 each contribute to the Zn(2+) site.

The protein belongs to the SecA family. Monomer and homodimer. Part of the essential Sec protein translocation apparatus which comprises SecA, SecYEG and auxiliary proteins SecDF. Other proteins may also be involved. Zn(2+) serves as cofactor.

It localises to the cell membrane. The protein resides in the cytoplasm. It catalyses the reaction ATP + H2O + cellular proteinSide 1 = ADP + phosphate + cellular proteinSide 2.. Functionally, part of the Sec protein translocase complex. Interacts with the SecYEG preprotein conducting channel. Has a central role in coupling the hydrolysis of ATP to the transfer of proteins into and across the cell membrane, serving as an ATP-driven molecular motor driving the stepwise translocation of polypeptide chains across the membrane. This Bifidobacterium longum (strain NCC 2705) protein is Protein translocase subunit SecA.